The following is a 604-amino-acid chain: Proline--tRNA ligase (604 aa).

Belongs to the class-II aminoacyl-tRNA synthetase family. ProS type 1 subfamily. Homodimer.

The protein localises to the cytoplasm. It catalyses the reaction tRNA(Pro) + L-proline + ATP = L-prolyl-tRNA(Pro) + AMP + diphosphate. Functionally, catalyzes the attachment of proline to tRNA(Pro) in a two-step reaction: proline is first activated by ATP to form Pro-AMP and then transferred to the acceptor end of tRNA(Pro). As ProRS can inadvertently accommodate and process non-cognate amino acids such as alanine and cysteine, to avoid such errors it has two additional distinct editing activities against alanine. One activity is designated as 'pretransfer' editing and involves the tRNA(Pro)-independent hydrolysis of activated Ala-AMP. The other activity is designated 'posttransfer' editing and involves deacylation of mischarged Ala-tRNA(Pro). The misacylated Cys-tRNA(Pro) is not edited by ProRS. The chain is Proline--tRNA ligase from Trichormus variabilis (strain ATCC 29413 / PCC 7937) (Anabaena variabilis).